Consider the following 310-residue polypeptide: Deoxyribonuclease gamma (310 aa).

The signal sequence occupies residues 1–25 (MSLHPASPRLASLLLFILALHDTLA). The Bipartite nuclear localization signal signature appears at 40–56 (KKENHEAMDIIVKIIKR). Active-site residues include E105 and H160. C199 and C236 are oxidised to a cystine. Positions 289–310 (SRAFTNNRKSVSLKKRKKGNRS) are not required for free DNA-nuclease activity but required for activity towards liposome-coated DNA. Positions 301 to 307 (LKKRKKG) match the Nuclear localization signal motif.

This sequence belongs to the DNase I family. The cofactor is Ca(2+). Mg(2+) serves as cofactor. Post-translationally, poly-ADP-ribosylated by PARP1. ADP-ribosylation negatively regulates enzymatic activity during apoptosis. In terms of tissue distribution, expressed at high levels in liver, spleen and testes. Expressed at lower levels in heart, lungs, skeletal muscle and kidney. Not expressed in brain. Predominantly expressed in macrophages; at protein level. Secreted by mononuclear phagocytes.

Its subcellular location is the nucleus. It is found in the endoplasmic reticulum. It localises to the secreted. With respect to regulation, inhibited by zinc. Inhibited by heparin and proteolysis by plasmin. In terms of biological role, has DNA hydrolytic activity. Is capable of both single- and double-stranded DNA cleavage, producing DNA fragments with 3'-OH ends. Can cleave chromatin to nucleosomal units and cleaves nucleosomal and liposome-coated DNA. Acts in internucleosomal DNA fragmentation (INDF) during apoptosis and necrosis. The role in apoptosis includes myogenic and neuronal differentiation, and BCR-mediated clonal deletion of self-reactive B cells. Is active on chromatin in apoptotic cell-derived membrane-coated microparticles and thus suppresses anti-DNA autoimmunity. Together with DNASE1, plays a key role in degrading neutrophil extracellular traps (NETs). NETs are mainly composed of DNA fibers and are released by neutrophils to bind pathogens during inflammation. Degradation of intravascular NETs by DNASE1 and DNASE1L3 is required to prevent formation of clots that obstruct blood vessels and cause organ damage following inflammation. The chain is Deoxyribonuclease gamma from Mus musculus (Mouse).